The sequence spans 1267 residues: Ankyrin repeat and ELMO domain-containing protein D (1267 aa).

The ELMO domain maps to 307 to 466; it reads SHQRLLETLW…FVSGLASEVL (160 aa). The segment covering 486–496 has biased composition (basic and acidic residues); that stretch reads KKKEKKSEKRG. Residues 486-598 are disordered; the sequence is KKKEKKSEKR…NNHILNNNHL (113 aa). Over residues 507–598 the composition is skewed to low complexity; sequence GSNGNINSTT…NNHILNNNHL (92 aa). 4 ANK repeats span residues 655–685, 689–718, 767–796, and 801–830; these read DGNS…FLNT, QGLT…DPFI, TLET…NINN, and SGQN…DPSI. Disordered stretches follow at residues 854–908, 924–1040, 1057–1082, and 1103–1215; these read NPTK…NSTS, TSIN…SPIF, SPTQ…NGAE, and ENLT…PPKD. Composition is skewed to low complexity over residues 859 to 870, 895 to 908, and 924 to 1033; these read SRSTSSTSSSTS, ITNN…NSTS, and TSIN…STSP. Over residues 1057 to 1080 the composition is skewed to polar residues; sequence SPTQESPQVISTPTSPPYLSNNNG. Low complexity-rich tracts occupy residues 1108-1176 and 1184-1213; these read NSGN…IGSH and HNGP…VTPP.

The chain is Ankyrin repeat and ELMO domain-containing protein D (elmoD) from Dictyostelium discoideum (Social amoeba).